Reading from the N-terminus, the 408-residue chain is Glutamate N-acetyltransferase (408 aa).

Positions 150, 176, 189, 271, 403, and 408 each coordinate substrate. Thr-189 (nucleophile) is an active-site residue.

It belongs to the ArgJ family. As to quaternary structure, heterotetramer of two alpha and two beta chains.

Its subcellular location is the cytoplasm. The enzyme catalyses N(2)-acetyl-L-ornithine + L-glutamate = N-acetyl-L-glutamate + L-ornithine. It functions in the pathway amino-acid biosynthesis; L-arginine biosynthesis; L-ornithine and N-acetyl-L-glutamate from L-glutamate and N(2)-acetyl-L-ornithine (cyclic): step 1/1. In terms of biological role, catalyzes the transfer of the acetyl group from N(2)-acetylornithine to glutamate, forming N-acetylglutamate and L-ornithine. The chain is Glutamate N-acetyltransferase from Methanococcus maripaludis (strain DSM 14266 / JCM 13030 / NBRC 101832 / S2 / LL).